The following is a 124-amino-acid chain: Small ribosomal subunit protein uS12 (124 aa).

Positions 1 to 23 (MATINQLVRKPRKRPVAKSDVPA) are disordered. Asp-89 is modified (3-methylthioaspartic acid). Positions 101-124 (ALDTSGVQNRRQGRSKYGTKRPKS) are disordered. Positions 111-124 (RQGRSKYGTKRPKS) are enriched in basic residues.

This sequence belongs to the universal ribosomal protein uS12 family. In terms of assembly, part of the 30S ribosomal subunit. Contacts proteins S8 and S17. May interact with IF1 in the 30S initiation complex.

In terms of biological role, with S4 and S5 plays an important role in translational accuracy. Interacts with and stabilizes bases of the 16S rRNA that are involved in tRNA selection in the A site and with the mRNA backbone. Located at the interface of the 30S and 50S subunits, it traverses the body of the 30S subunit contacting proteins on the other side and probably holding the rRNA structure together. The combined cluster of proteins S8, S12 and S17 appears to hold together the shoulder and platform of the 30S subunit. The protein is Small ribosomal subunit protein uS12 of Chromohalobacter salexigens (strain ATCC BAA-138 / DSM 3043 / CIP 106854 / NCIMB 13768 / 1H11).